We begin with the raw amino-acid sequence, 231 residues long: Cytochrome c oxidase subunit 2 (231 aa).

At 1–14 (MATPAQLGLQNATS) the chain is on the mitochondrial intermembrane side. The helical transmembrane segment at 15–45 (PIMEELIAFHDHALMIIFLISSLVLYIISLM) threads the bilayer. Residues 46-59 (LTTKLTHTSTMNAQ) are Mitochondrial matrix-facing. The chain crosses the membrane as a helical span at residues 60–87 (EIEMIWTILPAIILIMIALPSLRILYMT). Residues 88 to 231 (DEFNKPYLTL…WASYLYIVSL (144 aa)) lie on the Mitochondrial intermembrane side of the membrane. Positions 161, 196, 198, 200, 204, and 207 each coordinate Cu cation. Position 198 (glutamate 198) interacts with Mg(2+).

This sequence belongs to the cytochrome c oxidase subunit 2 family. Component of the cytochrome c oxidase (complex IV, CIV), a multisubunit enzyme composed of 14 subunits. The complex is composed of a catalytic core of 3 subunits MT-CO1, MT-CO2 and MT-CO3, encoded in the mitochondrial DNA, and 11 supernumerary subunits COX4I, COX5A, COX5B, COX6A, COX6B, COX6C, COX7A, COX7B, COX7C, COX8 and NDUFA4, which are encoded in the nuclear genome. The complex exists as a monomer or a dimer and forms supercomplexes (SCs) in the inner mitochondrial membrane with NADH-ubiquinone oxidoreductase (complex I, CI) and ubiquinol-cytochrome c oxidoreductase (cytochrome b-c1 complex, complex III, CIII), resulting in different assemblies (supercomplex SCI(1)III(2)IV(1) and megacomplex MCI(2)III(2)IV(2)). Found in a complex with TMEM177, COA6, COX18, COX20, SCO1 and SCO2. Interacts with TMEM177 in a COX20-dependent manner. Interacts with COX20. Interacts with COX16. Cu cation serves as cofactor.

Its subcellular location is the mitochondrion inner membrane. The enzyme catalyses 4 Fe(II)-[cytochrome c] + O2 + 8 H(+)(in) = 4 Fe(III)-[cytochrome c] + 2 H2O + 4 H(+)(out). Functionally, component of the cytochrome c oxidase, the last enzyme in the mitochondrial electron transport chain which drives oxidative phosphorylation. The respiratory chain contains 3 multisubunit complexes succinate dehydrogenase (complex II, CII), ubiquinol-cytochrome c oxidoreductase (cytochrome b-c1 complex, complex III, CIII) and cytochrome c oxidase (complex IV, CIV), that cooperate to transfer electrons derived from NADH and succinate to molecular oxygen, creating an electrochemical gradient over the inner membrane that drives transmembrane transport and the ATP synthase. Cytochrome c oxidase is the component of the respiratory chain that catalyzes the reduction of oxygen to water. Electrons originating from reduced cytochrome c in the intermembrane space (IMS) are transferred via the dinuclear copper A center (CU(A)) of subunit 2 and heme A of subunit 1 to the active site in subunit 1, a binuclear center (BNC) formed by heme A3 and copper B (CU(B)). The BNC reduces molecular oxygen to 2 water molecules using 4 electrons from cytochrome c in the IMS and 4 protons from the mitochondrial matrix. This chain is Cytochrome c oxidase subunit 2 (MT-CO2), found in Aotus nigriceps (Black-headed night monkey).